The primary structure comprises 465 residues: L-seryl-tRNA(Sec) selenium transferase (465 aa).

The residue at position 294 (K294) is an N6-(pyridoxal phosphate)lysine.

This sequence belongs to the SelA family. Pyridoxal 5'-phosphate serves as cofactor.

It is found in the cytoplasm. The enzyme catalyses L-seryl-tRNA(Sec) + selenophosphate + H(+) = L-selenocysteinyl-tRNA(Sec) + phosphate. The protein operates within aminoacyl-tRNA biosynthesis; selenocysteinyl-tRNA(Sec) biosynthesis; selenocysteinyl-tRNA(Sec) from L-seryl-tRNA(Sec) (bacterial route): step 1/1. Converts seryl-tRNA(Sec) to selenocysteinyl-tRNA(Sec) required for selenoprotein biosynthesis. The polypeptide is L-seryl-tRNA(Sec) selenium transferase (Mannheimia succiniciproducens (strain KCTC 0769BP / MBEL55E)).